The primary structure comprises 368 residues: RNA polymerase sigma factor SigA (368 aa).

The interval 60–86 (VVDENGDPSEHSLKKDEKEAEKAQAED) is disordered. A compositionally biased stretch (basic and acidic residues) spans 67–84 (PSEHSLKKDEKEAEKAQA). The interval 135–205 (LAEANLRLVV…TRAIADQART (71 aa)) is sigma-70 factor domain-2. Positions 159–162 (DLIQ) match the Interaction with polymerase core subunit RpoC motif. The interval 214-290 (ETINKLIRIQ…DQDATSPAEH (77 aa)) is sigma-70 factor domain-3. The sigma-70 factor domain-4 stretch occupies residues 303 to 356 (VLDTLTDREENVLRLRFGLDDGRTRTLEEVGKVFGVTRERIRQIEAKALRKLRH). Residues 329-348 (LEEVGKVFGVTRERIRQIEA) constitute a DNA-binding region (H-T-H motif).

This sequence belongs to the sigma-70 factor family. RpoD/SigA subfamily. In terms of assembly, interacts transiently with the RNA polymerase catalytic core.

It localises to the cytoplasm. In terms of biological role, sigma factors are initiation factors that promote the attachment of RNA polymerase to specific initiation sites and are then released. This sigma factor is the primary sigma factor during exponential growth. The sequence is that of RNA polymerase sigma factor SigA from Enterococcus faecalis (strain ATCC 700802 / V583).